The chain runs to 209 residues: Protein TIC 20-v, chloroplastic (209 aa).

The transit peptide at 1–49 directs the protein to the chloroplast; sequence MAIISQFFAPLPSLTGTLTLTGRSFLPLNLDTQFPKPRLSRDRAATLVL. 4 helical membrane-spanning segments follow: residues 63-83, 103-123, 132-152, and 173-193; these read IISA…GKFI, AFKS…FVVV, VRFN…PDLL, and TVFL…LFGL.

This sequence belongs to the Tic20 family. In terms of assembly, part of the Tic complex. In terms of tissue distribution, expressed in leaves, siliques and roots.

The protein localises to the plastid. It is found in the chloroplast inner membrane. Functionally, may be involved in protein precursor import into chloroplasts. Not redundant with TIC20-I, TIC20-II or TIC20-IV. This is Protein TIC 20-v, chloroplastic (TIC20-V) from Arabidopsis thaliana (Mouse-ear cress).